The primary structure comprises 130 residues: Protein ApaG (130 aa).

Residues Ser-3–Arg-127 enclose the ApaG domain.

This Methylocella silvestris (strain DSM 15510 / CIP 108128 / LMG 27833 / NCIMB 13906 / BL2) protein is Protein ApaG.